Reading from the N-terminus, the 104-residue chain is uncharacterized protein (104 aa).

2 consecutive transmembrane segments (helical) span residues 45-65 and 70-90; these read LYGI…IGVF and LYLS…AKGL.

It is found in the membrane. This is an uncharacterized protein from Saccharomyces cerevisiae (strain ATCC 204508 / S288c) (Baker's yeast).